Consider the following 142-residue polypeptide: Hemoglobin subunit alpha-A (142 aa).

One can recognise a Globin domain in the interval 2-142; the sequence is VLSANDKTNV…VGNVLTAKYR (141 aa). His-59 is a binding site for O2. Residue His-88 coordinates heme b.

Belongs to the globin family. Heterotetramer of two alpha chains and two beta chains. As to expression, red blood cells.

In terms of biological role, involved in oxygen transport from the lung to the various peripheral tissues. The polypeptide is Hemoglobin subunit alpha-A (HBAA) (Aegypius monachus (Cinereous vulture)).